A 382-amino-acid chain; its full sequence is 4-hydroxybutyrate dehydrogenase (382 aa).

Residues Asp-37, Asn-67, 94–98 (GSSID), 138–142 (TTSGT), and Lys-159 each bind NAD(+). Positions 193, 197, 261, and 280 each coordinate Fe cation. His-280 lines the NAD(+) pocket.

The protein belongs to the iron-containing alcohol dehydrogenase family. Requires Fe cation as cofactor.

The catalysed reaction is 4-hydroxybutanoate + NAD(+) = succinate semialdehyde + NADH + H(+). Its activity is regulated as follows. Shows competitive inhibition of GHBDH activity by the product succinic semialdehyde, and non-competitive inhibitions by the three other substrate-product combinations. The conversion of GHB to SSA is activated by two different saturating purified nudix hydrolases, B.methanolicus activator ACT and E.coli NudF. The nudix hydrolases do not activate the reverse reaction. Functionally, involved in the degradation of 4-hydroxybutyrate. Catalyzes the interconversion of gamma-hydroxybutyrate (GHB) and succinic semialdehyde (SSA). The chain is 4-hydroxybutyrate dehydrogenase from Cupriavidus necator (Alcaligenes eutrophus).